A 331-amino-acid polypeptide reads, in one-letter code: MITVTNARKNYGNFAALDDVTIEIPSGELTALLGPSGSGKSTLLRSIAGLEALDDGVVVIAGKDVTRVAPQKRDIGFVFQHYAAFKHMTVRDNVAFGLKIRKRPKAEITKRVDELLGIVGLDGFQHRYPAQLSGGQRQRMALARALAVDPQVLLLDEPFGALDAKVRADLRTWLRRLHEEVHVTTVLVTHDQEEALDVADRIAVMNKGRIEQVGTPEDVYDRPANEFVMSFLGDVARLNGHLVRPHDIRVGRDPSMALAAHEGTAESAGVTRATVERVVHLGFEVRVELRNAATGDLFSAQVTRGDAEALRLTDGETVYARATRIPELPTQ.

Residues 2-232 (ITVTNARKNY…PANEFVMSFL (231 aa)) form the ABC transporter domain. 34–41 (GPSGSGKS) contributes to the ATP binding site.

The protein belongs to the ABC transporter superfamily. Sulfate/tungstate importer (TC 3.A.1.6) family. In terms of assembly, the complex is composed of two ATP-binding proteins (CysA), two transmembrane proteins (CysT and CysW) and a solute-binding protein (CysP).

The protein localises to the cell membrane. The catalysed reaction is sulfate(out) + ATP + H2O = sulfate(in) + ADP + phosphate + H(+). The enzyme catalyses thiosulfate(out) + ATP + H2O = thiosulfate(in) + ADP + phosphate + H(+). Functionally, part of the ABC transporter complex CysAWTP involved in sulfate/thiosulfate import. Responsible for energy coupling to the transport system. This Nocardia farcinica (strain IFM 10152) protein is Sulfate/thiosulfate import ATP-binding protein CysA.